The primary structure comprises 207 residues: MSYSDKRDQYAPHMALVPMVVEQTTRGERSYDIYSRLLKERIIFLTGQVEDHMANLVAAQMLFLEAENPEKDIFLYINSPGGVITAGMSIYDTMQFIKPDVSTICMGQACSMGAFLLTAGAKGKRICLPNSRVMIHQPLGGFQGQATDIEIHAQEILKVKSRMNELMAKHTGRPIEEIAKDTERDRFLSADEAVEYGLVDKIFTHRD.

Catalysis depends on serine 111, which acts as the Nucleophile. Histidine 136 is a catalytic residue.

Belongs to the peptidase S14 family. In terms of assembly, fourteen ClpP subunits assemble into 2 heptameric rings which stack back to back to give a disk-like structure with a central cavity, resembling the structure of eukaryotic proteasomes.

It localises to the cytoplasm. The enzyme catalyses Hydrolysis of proteins to small peptides in the presence of ATP and magnesium. alpha-casein is the usual test substrate. In the absence of ATP, only oligopeptides shorter than five residues are hydrolyzed (such as succinyl-Leu-Tyr-|-NHMec, and Leu-Tyr-Leu-|-Tyr-Trp, in which cleavage of the -Tyr-|-Leu- and -Tyr-|-Trp bonds also occurs).. Cleaves peptides in various proteins in a process that requires ATP hydrolysis. Has a chymotrypsin-like activity. Plays a major role in the degradation of misfolded proteins. The protein is ATP-dependent Clp protease proteolytic subunit of Photorhabdus laumondii subsp. laumondii (strain DSM 15139 / CIP 105565 / TT01) (Photorhabdus luminescens subsp. laumondii).